Here is a 150-residue protein sequence, read N- to C-terminus: Ribonuclease pancreatic (150 aa).

The first 26 residues, 1–26 (MALKSLVLLSLLVLVLLLVRVQPSLG), serve as a signal peptide directing secretion. N-linked (Glc) (glycation) lysine; in vitro glycosylation is found at Lys27 and Lys33. Substrate-binding residues include Lys33 and Arg36. The Proton acceptor role is filled by His38. Intrachain disulfides connect Cys52–Cys110, Cys66–Cys121, Cys84–Cys136, and Cys91–Cys98. N-linked (GlcNAc...) asparagine; partial glycosylation is present at Asn60. Residues Lys63 and Lys67 are each glycosylated (N-linked (Glc) (glycation) lysine; in vitro). Substrate contacts are provided by residues 67 to 71 (KPVNT), Lys92, and Arg111. His145 functions as the Proton donor in the catalytic mechanism.

It belongs to the pancreatic ribonuclease family. As to quaternary structure, interacts with and forms tight 1:1 complexes with RNH1. Dimerization of two such complexes may occur. Interaction with RNH1 inhibits this protein. Monomer. As to expression, pancreas.

It is found in the secreted. The enzyme catalyses an [RNA] containing cytidine + H2O = an [RNA]-3'-cytidine-3'-phosphate + a 5'-hydroxy-ribonucleotide-3'-[RNA].. The catalysed reaction is an [RNA] containing uridine + H2O = an [RNA]-3'-uridine-3'-phosphate + a 5'-hydroxy-ribonucleotide-3'-[RNA].. Endonuclease that catalyzes the cleavage of RNA on the 3' side of pyrimidine nucleotides. Acts on single-stranded and double-stranded RNA. This is Ribonuclease pancreatic (RNASE1) from Bos taurus (Bovine).